A 242-amino-acid chain; its full sequence is Small ribosomal subunit protein uS2 (242 aa).

It belongs to the universal ribosomal protein uS2 family.

The protein is Small ribosomal subunit protein uS2 of Neisseria gonorrhoeae (strain ATCC 700825 / FA 1090).